Here is a 463-residue protein sequence, read N- to C-terminus: MAKSNEGLGTGLRTRHLTMMGLGSAIGAGLFLGTGVGIRAAGPAVLLAYIIAGAIVVLVMQMLGEMAAARPASGSFSRYGEDAFGHWAGFSLGWLYWFMLIMVMGAEMTGAAAIMGAWFGVEPWIPSLVCVVFFAVVNLVAVRGFGEFEYWFAFIKVAVIIAFLIIGIALIFGWLPGSTFVGTSNFIGDHGFMPNGISGVAAGLLAVAFAFGGIEIVTIAAAESDKPREAISLAVRAVIWRISVFYLGSVLVITFLMPYESINGADTAAESPFTQILAMANIPGTVGFMEAIIVLALLSAFNAQIYATSRLVFSMANRQDAPRVFSKLSTSHVPTNAVLLSMFFAFVSVGLQYWNPAGLLDFLLNAVGGCLIVVWAMITLSQLKLRKELQANDEISTVRMWAHPWLGILTLVLLAGLVALMLGDAASRSQVYSVAIVYGFLVLLSFVTVNSPLRGGRTPSDLN.

Transmembrane regions (helical) follow at residues 18-38, 40-60, 84-104, 117-137, 157-177, 200-220, 237-257, 276-296, 337-357, 358-378, 402-422, and 431-451; these read TMMG…GVGI, AAGP…VLVM, FGHW…IMVM, AWFG…FAVV, VAVI…WLPG, VAAG…VTIA, AVIW…TFLM, ILAM…IVLA, AVLL…WNPA, GLLD…WAMI, AHPW…ALML, and VYSV…TVNS.

Belongs to the amino acid-polyamine-organocation (APC) superfamily. Amino acid transporter (AAT) (TC 2.A.3.1) family.

The protein resides in the cell membrane. It carries out the reaction L-phenylalanine(in) + H(+)(in) = L-phenylalanine(out) + H(+)(out). It catalyses the reaction L-tryptophan(in) + H(+)(in) = L-tryptophan(out) + H(+)(out). The enzyme catalyses L-tyrosine(in) + H(+)(in) = L-tyrosine(out) + H(+)(out). Permease that is involved in the active transport across the cytoplasmic membrane of all three aromatic amino acids, phenylalanine, tyrosine and tryptophan. This Corynebacterium glutamicum (strain ATCC 13032 / DSM 20300 / JCM 1318 / BCRC 11384 / CCUG 27702 / LMG 3730 / NBRC 12168 / NCIMB 10025 / NRRL B-2784 / 534) protein is Aromatic amino acid transport protein AroP.